The sequence spans 204 residues: LexA repressor (204 aa).

Residues 27 to 47 (VREIGEAVGLASSSTVHGHLA) constitute a DNA-binding region (H-T-H motif). Catalysis depends on for autocatalytic cleavage activity residues serine 126 and lysine 164.

Belongs to the peptidase S24 family. Homodimer.

The enzyme catalyses Hydrolysis of Ala-|-Gly bond in repressor LexA.. Functionally, represses a number of genes involved in the response to DNA damage (SOS response), including recA and lexA. In the presence of single-stranded DNA, RecA interacts with LexA causing an autocatalytic cleavage which disrupts the DNA-binding part of LexA, leading to derepression of the SOS regulon and eventually DNA repair. The polypeptide is LexA repressor (Listeria monocytogenes serotype 4b (strain CLIP80459)).